A 257-amino-acid chain; its full sequence is Protein CUSTOS (257 aa).

The segment covering 1-11 (MSDLESSSSSS) has biased composition (low complexity). Positions 1–72 (MSDLESSSSS…HEQDGNELQT (72 aa)) are disordered. Residues 32 to 41 (QRPRGPEKPG) show a composition bias toward basic and acidic residues. S55 bears the Phosphoserine mark. T73 carries the post-translational modification Phosphothreonine. 2 disordered regions span residues 120-157 (FTSI…RRCR) and 170-257 (SAIH…VPSN). 2 stretches are compositionally biased toward basic residues: residues 180 to 190 (KKKKRKLKKKA) and 227 to 237 (TKKKKRKKKTK). The Nucleolar localization signal (NLS) signature appears at 228–236 (KKKKRKKKT).

This sequence belongs to the CUSTOS family.

It localises to the nucleus envelope. Its function is as follows. Plays a role in the regulation of Wnt signaling pathway during early development. The chain is Protein CUSTOS from Bos taurus (Bovine).